A 338-amino-acid chain; its full sequence is tRNA N6-adenosine threonylcarbamoyltransferase (338 aa).

Residues H111 and H115 each contribute to the Fe cation site. Residues 134–138 (LLSGG), D167, G180, and N275 each bind substrate. D304 lines the Fe cation pocket.

It belongs to the KAE1 / TsaD family. It depends on Fe(2+) as a cofactor.

Its subcellular location is the cytoplasm. It carries out the reaction L-threonylcarbamoyladenylate + adenosine(37) in tRNA = N(6)-L-threonylcarbamoyladenosine(37) in tRNA + AMP + H(+). Functionally, required for the formation of a threonylcarbamoyl group on adenosine at position 37 (t(6)A37) in tRNAs that read codons beginning with adenine. Is involved in the transfer of the threonylcarbamoyl moiety of threonylcarbamoyl-AMP (TC-AMP) to the N6 group of A37, together with TsaE and TsaB. TsaD likely plays a direct catalytic role in this reaction. The sequence is that of tRNA N6-adenosine threonylcarbamoyltransferase from Leptospira interrogans serogroup Icterohaemorrhagiae serovar copenhageni (strain Fiocruz L1-130).